The sequence spans 34 residues: Tau-theraphotoxin-Pc1c (34 aa).

Disulfide bonds link Cys-2-Cys-16, Cys-9-Cys-21, and Cys-15-Cys-28. The residue at position 34 (Phe-34) is a Phenylalanine amide.

This sequence belongs to the neurotoxin 10 (Hwtx-1) family. 62 (Vatx) subfamily. Expressed by the venom gland.

It localises to the secreted. Selectively activates mammalian TRPV1, or capsaicin receptor, a non-selective cation channel expressed by sensory neurons of the pain pathway. Is more potent than VaTx1 and VaTx2. Interacts with distinct regions of the channel than capsaicin, since it only acts on the extracellular face of the channel, and capsaicin binds to the cytosolic side. Also activates avian TRPV1, which is insensitive to capsaicin. In mice, elicits pain-related behaviors, such as licking and flinching of the affected limb. The paw of toxin-injected mice shows substantial edema. The polypeptide is Tau-theraphotoxin-Pc1c (Psalmopoeus cambridgei (Trinidad chevron tarantula)).